Consider the following 408-residue polypeptide: Putative agmatinase 3 (408 aa).

An N-terminal signal peptide occupies residues 1–21; the sequence is MKSVEWFTWGVFLLLSGFGEA. Mn(2+) is bound by residues His-198, Asp-222, His-224, Asp-226, Asp-319, and Asp-321.

It belongs to the arginase family. Mn(2+) serves as cofactor.

It carries out the reaction agmatine + H2O = urea + putrescine. In Schizosaccharomyces pombe (strain 972 / ATCC 24843) (Fission yeast), this protein is Putative agmatinase 3.